We begin with the raw amino-acid sequence, 371 residues long: Queuine tRNA-ribosyltransferase (371 aa).

The active-site Proton acceptor is the Asp-93. Substrate is bound by residues 93-97 (DSGGF), Asp-147, Gln-191, and Gly-218. Residues 249 to 255 (GVGTVVD) are RNA binding. Asp-268 acts as the Nucleophile in catalysis. An RNA binding; important for wobble base 34 recognition region spans residues 273–277 (TRNAR). 4 residues coordinate Zn(2+): Cys-306, Cys-308, Cys-311, and His-337.

This sequence belongs to the queuine tRNA-ribosyltransferase family. Homodimer. Within each dimer, one monomer is responsible for RNA recognition and catalysis, while the other monomer binds to the replacement base PreQ1. Zn(2+) serves as cofactor.

It carries out the reaction 7-aminomethyl-7-carbaguanine + guanosine(34) in tRNA = 7-aminomethyl-7-carbaguanosine(34) in tRNA + guanine. Its pathway is tRNA modification; tRNA-queuosine biosynthesis. Functionally, catalyzes the base-exchange of a guanine (G) residue with the queuine precursor 7-aminomethyl-7-deazaguanine (PreQ1) at position 34 (anticodon wobble position) in tRNAs with GU(N) anticodons (tRNA-Asp, -Asn, -His and -Tyr). Catalysis occurs through a double-displacement mechanism. The nucleophile active site attacks the C1' of nucleotide 34 to detach the guanine base from the RNA, forming a covalent enzyme-RNA intermediate. The proton acceptor active site deprotonates the incoming PreQ1, allowing a nucleophilic attack on the C1' of the ribose to form the product. After dissociation, two additional enzymatic reactions on the tRNA convert PreQ1 to queuine (Q), resulting in the hypermodified nucleoside queuosine (7-(((4,5-cis-dihydroxy-2-cyclopenten-1-yl)amino)methyl)-7-deazaguanosine). This is Queuine tRNA-ribosyltransferase from Leptospira biflexa serovar Patoc (strain Patoc 1 / Ames).